The primary structure comprises 330 residues: Urokinase plasminogen activator surface receptor (330 aa).

The first 20 residues, 1–20, serve as a signal peptide directing secretion; sequence MGQPLLLLLLVYTYIPGSWG. 3 UPAR/Ly6 domains span residues 21–112, 113–208, and 209–300; these read LRCL…RNRY, LECA…PPNG, and LQCY…PGKG. Cystine bridges form between Cys-23/Cys-44, Cys-26/Cys-32, and Cys-37/Cys-65. A glycan (N-linked (GlcNAc...) asparagine) is linked at Asn-28. Asn-72 carries an N-linked (GlcNAc...) asparagine glycan. 11 disulfides stabilise this stretch: Cys-91–Cys-96, Cys-115–Cys-142, Cys-118–Cys-125, Cys-135–Cys-164, Cys-170–Cys-187, Cys-188–Cys-193, Cys-211–Cys-239, Cys-214–Cys-222, Cys-232–Cys-258, Cys-264–Cys-282, and Cys-283–Cys-288. N-linked (GlcNAc...) asparagine glycosylation is found at Asn-179 and Asn-189. Asn-279 carries an N-linked (GlcNAc...) asparagine glycan. A lipid anchor (GPI-anchor amidated glycine) is attached at Gly-300. Residues 301-330 constitute a propeptide, removed in mature form; it reads GAPKTSPAHLSFFVSLLLTARLWGATLLCT.

Monomer. Interacts (via the UPAR/Ly6 domains) with SRPX2. Interacts with MRC2. Interacts with SORL1 (via N-terminal ectodomain); this interaction decreases PLAUR internalization. The ternary complex composed of PLAUR-PLAU-SERPINE1 also interacts with SORL1. Interacts with CD82; this interaction prevents PLAUR from binding to its high affinity ligand PLAU.

It is found in the cell membrane. In terms of biological role, acts as a receptor for urokinase plasminogen activator. Plays a role in localizing and promoting plasmin formation. Mediates the proteolysis-independent signal transduction activation effects of U-PA. In Bos taurus (Bovine), this protein is Urokinase plasminogen activator surface receptor (PLAUR).